The following is a 308-amino-acid chain: Carbamate kinase (308 aa).

This sequence belongs to the carbamate kinase family.

Its subcellular location is the cytoplasm. It catalyses the reaction hydrogencarbonate + NH4(+) + ATP = carbamoyl phosphate + ADP + H2O + H(+). This chain is Carbamate kinase, found in Synechocystis sp. (strain ATCC 27184 / PCC 6803 / Kazusa).